A 232-amino-acid polypeptide reads, in one-letter code: Orotidine 5'-phosphate decarboxylase (232 aa).

Residues D11, K32, 59-68 (DLKLHDIPHT), T116, R178, Q188, G208, and R209 contribute to the substrate site. K61 (proton donor) is an active-site residue.

The protein belongs to the OMP decarboxylase family. Type 1 subfamily. As to quaternary structure, homodimer.

It catalyses the reaction orotidine 5'-phosphate + H(+) = UMP + CO2. It participates in pyrimidine metabolism; UMP biosynthesis via de novo pathway; UMP from orotate: step 2/2. Catalyzes the decarboxylation of orotidine 5'-monophosphate (OMP) to uridine 5'-monophosphate (UMP). This Synechococcus sp. (strain JA-3-3Ab) (Cyanobacteria bacterium Yellowstone A-Prime) protein is Orotidine 5'-phosphate decarboxylase.